The following is a 524-amino-acid chain: Cytokinin dehydrogenase 7 (524 aa).

One can recognise an FAD-binding PCMH-type domain in the interval N58–A238. Residues A91, G93, N94, and G95 each contribute to the FAD site. H96 is modified (pros-8alpha-FAD histidine). The FAD site is built by S97, Q101, D162, T167, S173, V177, I228, Y479, S514, and Q517.

It belongs to the oxygen-dependent FAD-linked oxidoreductase family. It depends on FAD as a cofactor. Expressed in the vasculature of roots, hypocotyls, cotyledons and leaves of young seedlings. In flowers, expressed in the transmitting tissue of the gynoecium prior to pollination. Expressed in the mature embryo sac with maximum activity in the egg cell and the synergids.

Its subcellular location is the cytoplasm. The protein resides in the cytosol. The enzyme catalyses N(6)-dimethylallyladenine + A + H2O = 3-methyl-2-butenal + adenine + AH2. In terms of biological role, catalyzes the oxidation of cytokinins, a family of N(6)-substituted adenine derivatives that are plant hormones, where the substituent is an isopentenyl group. Catalyzes in vitro the oxidation of various types of cytokinin nucleotides that are known as direct products of cytokinin biosynthesis. This Arabidopsis thaliana (Mouse-ear cress) protein is Cytokinin dehydrogenase 7 (CKX7).